Here is a 586-residue protein sequence, read N- to C-terminus: Protein translocase subunit SecD (586 aa).

The next 6 membrane-spanning stretches (helical) occupy residues 7–27 (LILI…TLKW), 418–438 (SALA…LSGV), 439–459 (VAGF…LSAF), 465–485 (LTSI…NIVI), 521–541 (TFIA…GFAW), and 546–566 (GIVA…EFII).

Belongs to the SecD/SecF family. SecD subfamily. Forms a complex with SecF. Part of the essential Sec protein translocation apparatus which comprises SecA, SecYEG and auxiliary proteins SecDF. Other proteins may also be involved.

It is found in the cell inner membrane. Functionally, part of the Sec protein translocase complex. Interacts with the SecYEG preprotein conducting channel. SecDF uses the proton motive force (PMF) to complete protein translocation after the ATP-dependent function of SecA. This chain is Protein translocase subunit SecD, found in Borreliella burgdorferi (strain ATCC 35210 / DSM 4680 / CIP 102532 / B31) (Borrelia burgdorferi).